The following is a 105-amino-acid chain: Precursor of CEP15 (105 aa).

The first 29 residues, 1 to 29, serve as a signal peptide directing secretion; the sequence is MDATKIKFDVILLSFLLIISGIPSNLGLS. The propeptide occupies 30 to 90; it reads TSVRGTTRSE…PSPPVPDYDD (61 aa). Positions 68-80 are enriched in low complexity; the sequence is DYYDGGSSSSTTS. Positions 68-105 are disordered; the sequence is DYYDGGSSSSTTSPSPPVPDYDDIYRRQGDVPSPGIGH. 2 positions are modified to hydroxyproline: Pro99 and Pro101.

This sequence belongs to the C-terminally encoded plant signaling peptide (CEP) family. Interacts with CEP receptors (e.g. CEPR1 and CEPR2). Post-translationally, the mature small signaling peptide is generated by proteolytic processing of the longer precursor.

The protein localises to the secreted. Its subcellular location is the extracellular space. The protein resides in the apoplast. Functionally, extracellular signaling peptide that may regulate primary root growth rate and systemic nitrogen (N)-demand signaling. In Arabidopsis thaliana (Mouse-ear cress), this protein is Precursor of CEP15.